Consider the following 118-residue polypeptide: Class I hydrophobin 1 (118 aa).

Positions 1–20 are cleaved as a signal peptide; it reads MFARLSTALLAFTLATAVVA. 4 disulfide bridges follow: Cys-34/Cys-97, Cys-41/Cys-91, Cys-42/Cys-77, and Cys-98/Cys-111. The N-linked (GlcNAc...) asparagine glycan is linked to Asn-54. The N-linked (GlcNAc...) asparagine glycan is linked to Asn-115.

It belongs to the fungal hydrophobin family. As to quaternary structure, self-assembles to form functional amyloid fibrils called rodlets. Self-assembly into fibrillar rodlets occurs spontaneously at hydrophobic:hydrophilic interfaces and the rodlets further associate laterally to form amphipathic monolayers.

The protein resides in the secreted. It localises to the cell wall. Its function is as follows. Aerial growth, conidiation, and dispersal of filamentous fungi in the environment rely upon a capability of their secreting small amphipathic proteins called hydrophobins (HPBs) with low sequence identity. Class I can self-assemble into an outermost layer of rodlet bundles on aerial cell surfaces, conferring cellular hydrophobicity that supports fungal growth, development and dispersal; whereas Class II form highly ordered films at water-air interfaces through intermolecular interactions but contribute nothing to the rodlet structure. In Coprinopsis cinerea (strain Okayama-7 / 130 / ATCC MYA-4618 / FGSC 9003) (Inky cap fungus), this protein is Class I hydrophobin 1.